A 163-amino-acid polypeptide reads, in one-letter code: Protein FAM167B (163 aa).

Positions 73 to 132 (FDSMDSALEWLRRELREMQAQDRQLAGQLLRLRAQLHRLKMDQACHLHQELLDEAELELE) form a coiled coil.

The protein belongs to the FAM167 (SEC) family.

This chain is Protein FAM167B (FAM167B), found in Homo sapiens (Human).